The following is a 381-amino-acid chain: Flap endonuclease 1 (381 aa).

Residues 1–105 (MGIKGLNSII…HELDKRTSRR (105 aa)) are N-domain. Aspartate 34 contributes to the Mg(2+) binding site. 2 residues coordinate DNA: arginine 47 and arginine 71. 5 residues coordinate Mg(2+): aspartate 87, glutamate 156, glutamate 158, aspartate 177, and aspartate 179. An I-domain region spans residues 120-251 (EKMKHERRLV…VTALKLMKEH (132 aa)). Position 156 (glutamate 156) interacts with DNA. Positions 229 and 231 each coordinate DNA. Aspartate 231 provides a ligand contact to Mg(2+). Residues 338-346 (VQGRLDGFF) form an interaction with PCNA region.

Belongs to the XPG/RAD2 endonuclease family. FEN1 subfamily. Interacts with PCNA. Three molecules of FEN1 bind to one PCNA trimer with each molecule binding to one PCNA monomer. PCNA stimulates the nuclease activity without altering cleavage specificity. The cofactor is Mg(2+). In terms of processing, phosphorylated. Phosphorylation upon DNA damage induces relocalization to the nuclear plasma.

It is found in the nucleus. The protein resides in the nucleolus. It localises to the nucleoplasm. Its subcellular location is the mitochondrion. Functionally, structure-specific nuclease with 5'-flap endonuclease and 5'-3' exonuclease activities involved in DNA replication and repair. During DNA replication, cleaves the 5'-overhanging flap structure that is generated by displacement synthesis when DNA polymerase encounters the 5'-end of a downstream Okazaki fragment. It enters the flap from the 5'-end and then tracks to cleave the flap base, leaving a nick for ligation. Also involved in the long patch base excision repair (LP-BER) pathway, by cleaving within the apurinic/apyrimidinic (AP) site-terminated flap. Acts as a genome stabilization factor that prevents flaps from equilibrating into structures that lead to duplications and deletions. Also possesses 5'-3' exonuclease activity on nicked or gapped double-stranded DNA, and exhibits RNase H activity. Also involved in replication and repair of rDNA and in repairing mitochondrial DNA. The sequence is that of Flap endonuclease 1 from Candida glabrata (strain ATCC 2001 / BCRC 20586 / JCM 3761 / NBRC 0622 / NRRL Y-65 / CBS 138) (Yeast).